The following is a 190-amino-acid chain: Peptidyl-tRNA hydrolase (190 aa).

Residue Phe-14 coordinates tRNA. His-19 acts as the Proton acceptor in catalysis. Met-64, Asn-66, and Asn-112 together coordinate tRNA.

It belongs to the PTH family. As to quaternary structure, monomer.

The protein localises to the cytoplasm. The enzyme catalyses an N-acyl-L-alpha-aminoacyl-tRNA + H2O = an N-acyl-L-amino acid + a tRNA + H(+). Its function is as follows. Hydrolyzes ribosome-free peptidyl-tRNAs (with 1 or more amino acids incorporated), which drop off the ribosome during protein synthesis, or as a result of ribosome stalling. Catalyzes the release of premature peptidyl moieties from peptidyl-tRNA molecules trapped in stalled 50S ribosomal subunits, and thus maintains levels of free tRNAs and 50S ribosomes. The sequence is that of Peptidyl-tRNA hydrolase from Staphylococcus aureus (strain bovine RF122 / ET3-1).